The primary structure comprises 313 residues: Ribose 1,5-bisphosphate isomerase (313 aa).

Residues 17–20 (RGAA) and R57 contribute to the substrate site. C121 functions as the Proton acceptor in the catalytic mechanism. Residue D190 is the Proton donor of the active site. Residues 200–201 (NK) and K226 each bind substrate.

This sequence belongs to the eIF-2B alpha/beta/delta subunits family. R15P isomerase subfamily.

It carries out the reaction alpha-D-ribose 1,5-bisphosphate = D-ribulose 1,5-bisphosphate. Its function is as follows. Catalyzes the isomerization of ribose 1,5-bisphosphate (R15P) to ribulose 1,5-bisphosphate (RuBP), the CO(2) acceptor and substrate for RubisCO. Functions in an archaeal AMP degradation pathway, together with AMP phosphorylase and RubisCO. The polypeptide is Ribose 1,5-bisphosphate isomerase (Archaeoglobus fulgidus (strain ATCC 49558 / DSM 4304 / JCM 9628 / NBRC 100126 / VC-16)).